The following is a 428-amino-acid chain: tRNA modification GTPase MnmE (428 aa).

Residues Arg20, Glu77, and Lys117 each contribute to the (6S)-5-formyl-5,6,7,8-tetrahydrofolate site. One can recognise a TrmE-type G domain in the interval 213–351 (GFEVAIVGSP…LVSRISDTLR (139 aa)). GTP is bound by residues 223-228 (NVGKST), 242-248 (SEYAGTT), and 267-270 (DTAG). Residues Ser227 and Thr248 each contribute to the Mg(2+) site. Lys428 is a binding site for (6S)-5-formyl-5,6,7,8-tetrahydrofolate.

It belongs to the TRAFAC class TrmE-Era-EngA-EngB-Septin-like GTPase superfamily. TrmE GTPase family. Homodimer. Heterotetramer of two MnmE and two MnmG subunits. K(+) serves as cofactor.

The protein localises to the cytoplasm. Functionally, exhibits a very high intrinsic GTPase hydrolysis rate. Involved in the addition of a carboxymethylaminomethyl (cmnm) group at the wobble position (U34) of certain tRNAs, forming tRNA-cmnm(5)s(2)U34. The protein is tRNA modification GTPase MnmE of Ruegeria sp. (strain TM1040) (Silicibacter sp.).